The primary structure comprises 742 residues: RING finger protein 145 homolog (742 aa).

11 helical membrane-spanning segments follow: residues 109-129 (AAII…TLPL), 138-158 (HFLS…YVDL), 178-198 (HGFH…LLEV), 233-253 (ACTG…PSLI), 285-305 (ILEL…YVEL), 318-338 (ILLT…ALAV), 368-388 (SGYT…FLGM), 395-415 (ILLA…LFEI), 438-458 (ICIA…MLAL), 463-483 (IYTA…IGVI), and 533-553 (VKVG…IVNI). The RING-type; atypical zinc-finger motif lies at 592 to 630 (CAICFIEMKEEARITPCKHYFHGPCLRKWLAVKMVCPLC). Disordered stretches follow at residues 642–684 (KSSS…PGDM) and 722–742 (AYES…ENNN). A compositionally biased stretch (acidic residues) spans 659–672 (AAVEENPENPEEQP).

The protein localises to the membrane. It localises to the golgi apparatus. The protein resides in the cis-Golgi network. Its subcellular location is the trans-Golgi network. The enzyme catalyses S-ubiquitinyl-[E2 ubiquitin-conjugating enzyme]-L-cysteine + [acceptor protein]-L-lysine = [E2 ubiquitin-conjugating enzyme]-L-cysteine + N(6)-ubiquitinyl-[acceptor protein]-L-lysine.. Functionally, E3 ubiquitin ligase that catalyzes the direct transfer of ubiquitin from E2 ubiquitin-conjugating enzyme to a specific substrate. Acting downstream of probable Golgi transport protein eas-1, involved in inhibition of activation of transcription factor sbp-1, thereby playing a role in regulating AMsh glial cell size. This Caenorhabditis elegans protein is RING finger protein 145 homolog.